Here is a 108-residue protein sequence, read N- to C-terminus: Phosphoribosyl-AMP cyclohydrolase (108 aa).

D73 contacts Mg(2+). C74 contributes to the Zn(2+) binding site. 2 residues coordinate Mg(2+): D75 and D77. C90 and C97 together coordinate Zn(2+).

Belongs to the PRA-CH family. As to quaternary structure, homodimer. Requires Mg(2+) as cofactor. The cofactor is Zn(2+).

The protein localises to the cytoplasm. It catalyses the reaction 1-(5-phospho-beta-D-ribosyl)-5'-AMP + H2O = 1-(5-phospho-beta-D-ribosyl)-5-[(5-phospho-beta-D-ribosylamino)methylideneamino]imidazole-4-carboxamide. It functions in the pathway amino-acid biosynthesis; L-histidine biosynthesis; L-histidine from 5-phospho-alpha-D-ribose 1-diphosphate: step 3/9. Functionally, catalyzes the hydrolysis of the adenine ring of phosphoribosyl-AMP. The sequence is that of Phosphoribosyl-AMP cyclohydrolase from Lactiplantibacillus plantarum (strain ATCC BAA-793 / NCIMB 8826 / WCFS1) (Lactobacillus plantarum).